Reading from the N-terminus, the 1335-residue chain is Phospholipid-transporting ATPase IK (1335 aa).

The Cytoplasmic segment spans residues 1–74; sequence MDGVHLGENL…LYEQFHRMSN (74 aa). Residues 75 to 95 traverse the membrane as a helical segment; that stretch reads LYFLFIIILQGIPEISTLPWF. Residues 96–295 are Exoplasmic loop-facing; it reads TLFAPLVCLF…LDLMMNKLVA (200 aa). A helical membrane pass occupies residues 296-316; it reads LIFLSLVIASLLLTVGFTFMV. Residues 317-339 are Cytoplasmic-facing; sequence KQFKAKHYYMSPTHGRSDAMESF. The helical transmembrane segment at 340–360 threads the bilayer; that stretch reads FIFWGFLILLSVMVPMAMFII. At 361 to 917 the chain is on the exoplasmic loop side; the sequence is AEFIYLGNSI…YMRVCKFLRY (557 aa). D407 (4-aspartylphosphate intermediate) is an active-site residue. Positions 407, 408, 409, 504, 545, 568, 601, 681, 682, 683, 831, and 837 each coordinate ATP. Position 407 (D407) interacts with Mg(2+). T409 provides a ligand contact to Mg(2+). D857 lines the Mg(2+) pocket. ATP is bound by residues N860 and D861. Position 861 (D861) interacts with Mg(2+). A helical transmembrane segment spans residues 918–938; that stretch reads FFYKTVASMMAQIWFSLVNGF. Residues 939–946 are Cytoplasmic-facing; that stretch reads SAQPLYEG. The chain crosses the membrane as a helical span at residues 947–967; it reads WFLALFNLLYSTLPVLYIGLF. Topologically, residues 968 to 995 are exoplasmic loop; the sequence is EQDVTAEKSLKMPELYMAGQKGELFNYS. A helical transmembrane segment spans residues 996 to 1016; the sequence is IFMQAITHGTITSMINFFVTV. Over 1017–1033 the chain is Cytoplasmic; the sequence is MVSSDMSKAGSSHDYQS. A helical transmembrane segment spans residues 1034–1054; sequence LGVLVAISSLLSVTLEVMLVV. Position 1055 (K1055) is a topological domain, exoplasmic loop. A helical membrane pass occupies residues 1056–1076; that stretch reads YWTLLFVGAVVLSLSSYVLMT. Residues 1077–1104 lie on the Cytoplasmic side of the membrane; the sequence is SLTQSLWMYRISPKTFPFLFADYNVLFE. Residues 1105 to 1125 traverse the membrane as a helical segment; it reads PCSLLLIVLNVALNVLPMLAL. Residues 1126–1335 lie on the Exoplasmic loop side of the membrane; sequence RTIHRTVLKQ…SQLEVPRKQS (210 aa). Disordered regions lie at residues 1192–1215, 1236–1280, and 1314–1335; these read VDDS…PLQN, FGKG…GKLL, and SPLW…RKQS. 2 stretches are compositionally biased toward polar residues: residues 1246-1255 and 1266-1276; these read PNTSSQTMEK and QKLPTTTSATS.

It belongs to the cation transport ATPase (P-type) (TC 3.A.3) family. Type IV subfamily. Requires Mg(2+) as cofactor. As to expression, expressed in testis, specifically in spermatids within seminiferous tubules (at protein level).

The protein localises to the cytoplasmic vesicle. Its subcellular location is the secretory vesicle. It localises to the acrosome membrane. The protein resides in the endoplasmic reticulum membrane. The enzyme catalyses ATP + H2O + phospholipidSide 1 = ADP + phosphate + phospholipidSide 2.. It catalyses the reaction a 1,2-diacyl-sn-glycero-3-phospho-L-serine(out) + ATP + H2O = a 1,2-diacyl-sn-glycero-3-phospho-L-serine(in) + ADP + phosphate + H(+). Its function is as follows. P4-ATPase flippase which catalyzes the hydrolysis of ATP coupled to the transport of aminophospholipids from the outer to the inner leaflet of various membranes and ensures the maintenance of asymmetric distribution of phospholipids. Phospholipid translocation also seems to be implicated in vesicle formation and in uptake of lipid signaling molecules. May be responsible for the maintenance of asymmetric distribution of phosphatidylserine (PS) in spermatozoa membranes. Involved in acrosome reactions and binding of spermatozoa to zona pellucida. This chain is Phospholipid-transporting ATPase IK, found in Mus musculus (Mouse).